We begin with the raw amino-acid sequence, 151 residues long: Large ribosomal subunit protein bL9 (151 aa).

This sequence belongs to the bacterial ribosomal protein bL9 family.

Its function is as follows. Binds to the 23S rRNA. This chain is Large ribosomal subunit protein bL9, found in Kosmotoga olearia (strain ATCC BAA-1733 / DSM 21960 / TBF 19.5.1).